The primary structure comprises 272 residues: Insulin-like growth factor-binding protein 1 (272 aa).

Positions Met-1–Ser-25 are cleaved as a signal peptide. The 82-residue stretch at Gln-28–Glu-109 folds into the IGFBP N-terminal domain. 5 cysteine pairs are disulfide-bonded: Cys-32–Cys-59, Cys-35–Cys-61, Cys-43–Cys-62, Cys-50–Cys-65, and Cys-73–Cys-86. Ser-139, Ser-157, and Ser-169 each carry phosphoserine. Thr-170 carries the post-translational modification Phosphothreonine. A Phosphotyrosine modification is found at Tyr-171. Positions Lys-186–Cys-264 constitute a Thyroglobulin type-1 domain. Cystine bridges form between Cys-189–Cys-219, Cys-230–Cys-241, and Cys-243–Cys-264. At Ser-255 the chain carries Phosphoserine. Positions Arg-259–Asp-261 match the Cell attachment site motif.

Binds equally well IGF1 and IGF2. Interacts with integrin ITGA5:ITGB1. Interacts with VHL; this interaction inhibits HIF1A degradation.

Its subcellular location is the secreted. In terms of biological role, multifunctional protein that plays a critical role in regulating the availability of IGFs such as IGF1 and IGF2 to their receptors and thereby regulates IGF-mediated cellular processes including cell migration, proliferation, differentiation or apoptosis in a cell-type specific manner. Also plays a positive role in cell migration by interacting with integrin ITGA5:ITGB1 through its RGD motif. Mechanistically, binding to integrins leads to activation of focal adhesion kinase/PTK2 and stimulation of the mitogen-activated protein kinase (MAPK) pathway. Regulates cardiomyocyte apoptosis by suppressing HIF-1alpha/HIF1A degradation through ubiquitination. The polypeptide is Insulin-like growth factor-binding protein 1 (IGFBP1) (Ictidomys tridecemlineatus (Thirteen-lined ground squirrel)).